Here is a 202-residue protein sequence, read N- to C-terminus: Glycerol-3-phosphate acyltransferase (202 aa).

Transmembrane regions (helical) follow at residues 3 to 23 (ILLA…VVVS), 51 to 71 (KAAI…VWLV), 74 to 94 (FGIG…LGHL), 116 to 136 (AVHP…AFFF), and 140 to 160 (SLAA…LFGT).

Belongs to the PlsY family. In terms of assembly, probably interacts with PlsX.

It localises to the cell inner membrane. It carries out the reaction an acyl phosphate + sn-glycerol 3-phosphate = a 1-acyl-sn-glycero-3-phosphate + phosphate. The protein operates within lipid metabolism; phospholipid metabolism. Functionally, catalyzes the transfer of an acyl group from acyl-phosphate (acyl-PO(4)) to glycerol-3-phosphate (G3P) to form lysophosphatidic acid (LPA). This enzyme utilizes acyl-phosphate as fatty acyl donor, but not acyl-CoA or acyl-ACP. This chain is Glycerol-3-phosphate acyltransferase, found in Burkholderia thailandensis (strain ATCC 700388 / DSM 13276 / CCUG 48851 / CIP 106301 / E264).